The primary structure comprises 430 residues: Tapasin (430 aa).

Positions 1-15 (MAAGLRLLLAGLCWS) are cleaved as a signal peptide. The Lumenal segment spans residues 16-399 (QFRVEDAASP…TEGPHLEDIT (384 aa)). An intrachain disulfide couples C34 to C99. Residues 61–128 (GDAETPPEPG…PDARSPPTAG (68 aa)) are disordered. An N-linked (GlcNAc...) asparagine glycan is attached at N78. Residues 101–111 (LNPTNPQTGSD) are compositionally biased toward polar residues. Ig-like C1-type domains lie at 139 to 273 (PQYG…LQLH) and 278 to 382 (PKVT…MRVS). C299 and C368 are disulfide-bonded. The segment at 316-342 (RAGGSGTSQSPRDTVMDSWTSGHRQAA) is disordered. Over residues 322-338 (TSQSPRDTVMDSWTSGH) the composition is skewed to polar residues. The chain crosses the membrane as a helical span at residues 400–417 (GLFLVAFVLCGLIRWLYP). Residues 418–430 (KAARPKEETKKSQ) are Cytoplasmic-facing.

Interacts with TAP1 and is thus a subunit of the TAP complex. Interaction with TAP1 is TAP2 independent and is required for efficient peptide-TAP interaction. Obligatory mediator for the interaction between newly assembled MHC class I molecules, calreticulin, ERp57 and TAP. Up to 4 MHC class I/tapasin complexes bind to 1 TAP.

It localises to the endoplasmic reticulum membrane. Involved in the association of MHC class I with transporter associated with antigen processing (TAP) and in the assembly of MHC class I with peptide (peptide loading). This Gallus gallus (Chicken) protein is Tapasin (TAPBP).